A 66-amino-acid chain; its full sequence is Small ribosomal subunit protein bS21B (66 aa).

The tract at residues 38-66 is disordered; the sequence is YVKPTQKRKIAKKAAISKAKKEARRSYSY.

This sequence belongs to the bacterial ribosomal protein bS21 family.

The protein is Small ribosomal subunit protein bS21B of Francisella tularensis subsp. tularensis (strain SCHU S4 / Schu 4).